The sequence spans 680 residues: Heterokaryon incompatibility protein 6, OR allele (680 aa).

Functionally, involved in the non-self-recognition during asexual growth of N.crassa. This process involves restriction of heterokaryon formation via genetic differences at 11 het loci, including mating type. This is Heterokaryon incompatibility protein 6, OR allele (het-6) from Neurospora crassa (strain ATCC 24698 / 74-OR23-1A / CBS 708.71 / DSM 1257 / FGSC 987).